A 133-amino-acid chain; its full sequence is Large ribosomal subunit protein bL19 (133 aa).

It belongs to the bacterial ribosomal protein bL19 family.

Its function is as follows. This protein is located at the 30S-50S ribosomal subunit interface and may play a role in the structure and function of the aminoacyl-tRNA binding site. The chain is Large ribosomal subunit protein bL19 from Sulfurihydrogenibium sp. (strain YO3AOP1).